The following is a 553-amino-acid chain: Hydroxylamine reductase (553 aa).

Cys-3, Cys-6, Cys-18, and Cys-25 together coordinate [2Fe-2S] cluster. 8 residues coordinate hybrid [4Fe-2O-2S] cluster: His-252, Glu-276, Cys-320, Cys-408, Cys-436, Cys-461, Glu-495, and Lys-497. A Cysteine persulfide modification is found at Cys-408.

Belongs to the HCP family. It depends on [2Fe-2S] cluster as a cofactor. The cofactor is hybrid [4Fe-2O-2S] cluster.

The protein localises to the cytoplasm. The enzyme catalyses A + NH4(+) + H2O = hydroxylamine + AH2 + H(+). Functionally, catalyzes the reduction of hydroxylamine to form NH(3) and H(2)O. The chain is Hydroxylamine reductase from Vibrio parahaemolyticus serotype O3:K6 (strain RIMD 2210633).